The chain runs to 183 residues: I-kappa-B like protein N2 (183 aa).

ANK repeat units lie at residues 62–95 and 99–129; these read DGNT…DLNL and CHKP…NLEA. The tract at residues 163–183 is disordered; the sequence is PRQDGSSEDEVSDSEEKSDSE.

Belongs to the polydnaviridae I-Kappa-B like protein family.

In terms of biological role, suppresses the host immune response through NF-kappa-B inactivation. Possesses ankyrin repeat domains required for NF-kappa-B binding but lacks the regulatory regions required for dissociation from NF-kappa-B and degradation. Therefore, prevents host NF-kappa-B release and subsequent activation. The polypeptide is I-kappa-B like protein N2 (N5) (Microplitis demolitor (Parasitoid wasp)).